The following is a 159-amino-acid chain: MRKLPITREGYCKLQEELEKLVKVVKPSVVAAVAQARELGDLSENAEYHEARKEQSFVEGKIRELQLCLSEAEVIDVSQFTGERVKFGASVTLENMESKSVLIYQIVGNLESDIKEGKISVSSPIGKAVMNKEVGEIVEIDLPSGKKTYKILGVEFRQS.

Positions 45 to 67 form a coiled coil; sequence NAEYHEARKEQSFVEGKIRELQL.

This sequence belongs to the GreA/GreB family.

Functionally, necessary for efficient RNA polymerase transcription elongation past template-encoded arresting sites. The arresting sites in DNA have the property of trapping a certain fraction of elongating RNA polymerases that pass through, resulting in locked ternary complexes. Cleavage of the nascent transcript by cleavage factors such as GreA or GreB allows the resumption of elongation from the new 3'terminus. GreA releases sequences of 2 to 3 nucleotides. The polypeptide is Transcription elongation factor GreA (Neorickettsia sennetsu (strain ATCC VR-367 / Miyayama) (Ehrlichia sennetsu)).